Reading from the N-terminus, the 762-residue chain is 5-methyltetrahydropteroyltriglutamate--homocysteine methyltransferase (762 aa).

5-methyltetrahydropteroyltri-L-glutamate contacts are provided by residues 17–20 (REWK) and Lys-111. Residues 435-437 (IGS) and Glu-488 each bind L-homocysteine. L-methionine is bound by residues 435 to 437 (IGS) and Glu-488. 5-methyltetrahydropteroyltri-L-glutamate contacts are provided by residues 519–520 (RC) and Trp-565. Asp-603 provides a ligand contact to L-homocysteine. L-methionine is bound at residue Asp-603. 5-methyltetrahydropteroyltri-L-glutamate is bound at residue Glu-609. Zn(2+) is bound by residues His-645, Cys-647, and Glu-669. Catalysis depends on His-698, which acts as the Proton donor. Cys-730 contributes to the Zn(2+) binding site.

It belongs to the vitamin-B12 independent methionine synthase family. Zn(2+) is required as a cofactor.

It catalyses the reaction 5-methyltetrahydropteroyltri-L-glutamate + L-homocysteine = tetrahydropteroyltri-L-glutamate + L-methionine. Its pathway is amino-acid biosynthesis; L-methionine biosynthesis via de novo pathway; L-methionine from L-homocysteine (MetE route): step 1/1. Its function is as follows. Catalyzes the transfer of a methyl group from 5-methyltetrahydrofolate to homocysteine resulting in methionine formation. This Bacillus cereus (strain ATCC 10987 / NRS 248) protein is 5-methyltetrahydropteroyltriglutamate--homocysteine methyltransferase.